The chain runs to 157 residues: Protein Smg homolog (157 aa).

This sequence belongs to the Smg family.

The protein is Protein Smg homolog of Colwellia psychrerythraea (strain 34H / ATCC BAA-681) (Vibrio psychroerythus).